Reading from the N-terminus, the 598-residue chain is MASPTPAPRPDQISASTPLLQSDSTSSCASSIRSLSPSRRRHRNGRTSPAAAASARNLSFASALLSSLCAGSITIFSMYGHIFQERLHYTQFEVNGLSSAASFATYMPVPLLGYMCDRVGPGPLSFVSALFFAAGYGLAAGVYKREADGAALGNGADGEDTGRLAYAAMITAFVFIGVGTCSMYMSAVATCAKNFGRGKHRGLALAVPIAAFGLSGMWQSQLGSRVFYERFADGTKGDLDVFHFFIFLGVLLFVVGCLGTFGLKIVDEEDLIDEAVEELERSGYLDGSTFLQGSWTADRPGYGAIEQSPLDMESAGILDPSKPDNDSDSEEEDDNARIKKTWVLNAETRRFLTDHTMWCFALGFFLMIGPGEAFINNLGTVIKTLYPPHLKFVGEPTSAATHVSIVGITSTLVRLLTGSLTDLLAPSPQARHVQITSSGTLERKRFSLSRVSFLLFFAVTLSVGLATLASGWIQNHGERFWVASGLVGAGYGAVFSLTPIIITVIWGVENFATNWGIVAMFPALGATFWGLVYSAVYQSGVEKAASNGQGGEEDQFCYGSECYASAFWAMAASVWVACGLVLWAWKGKNGWAQRGIVV.

Residues 1-49 (MASPTPAPRPDQISASTPLLQSDSTSSCASSIRSLSPSRRRHRNGRTSP) are disordered. The span at 22-37 (SDSTSSCASSIRSLSP) shows a compositional bias: low complexity. N-linked (GlcNAc...) asparagine glycosylation occurs at Asn-57. A run of 6 helical transmembrane segments spans residues 63-83 (ALLS…GHIF), 96-116 (GLSS…GYMC), 122-142 (GPLS…AAGV), 164-184 (LAYA…CSMY), 202-222 (GLAL…QSQL), and 241-261 (VFHF…LGTF). The segment at 315 to 334 (AGILDPSKPDNDSDSEEEDD) is disordered. N-linked (GlcNAc...) asparagine glycosylation occurs at Asn-325. 6 consecutive transmembrane segments (helical) span residues 355–375 (HTMW…EAFI), 405–425 (IVGI…DLLA), 453–473 (FLLF…SGWI), 486–506 (LVGA…TVIW), 516–536 (GIVA…YSAV), and 565–585 (SAFW…LWAW).

The protein belongs to the major facilitator superfamily.

Its subcellular location is the vacuole membrane. Its function is as follows. Probable transporter. The polypeptide is Probable transporter mch1 (mch1) (Neurospora crassa (strain ATCC 24698 / 74-OR23-1A / CBS 708.71 / DSM 1257 / FGSC 987)).